The sequence spans 319 residues: Acetyl-coenzyme A carboxylase carboxyl transferase subunit alpha (319 aa).

Residues 35 to 296 enclose the CoA carboxyltransferase C-terminal domain; that stretch reads NIDEEVHRLR…KAQLLADLAD (262 aa).

It belongs to the AccA family. In terms of assembly, acetyl-CoA carboxylase is a heterohexamer composed of biotin carboxyl carrier protein (AccB), biotin carboxylase (AccC) and two subunits each of ACCase subunit alpha (AccA) and ACCase subunit beta (AccD).

The protein resides in the cytoplasm. The enzyme catalyses N(6)-carboxybiotinyl-L-lysyl-[protein] + acetyl-CoA = N(6)-biotinyl-L-lysyl-[protein] + malonyl-CoA. It functions in the pathway lipid metabolism; malonyl-CoA biosynthesis; malonyl-CoA from acetyl-CoA: step 1/1. Its function is as follows. Component of the acetyl coenzyme A carboxylase (ACC) complex. First, biotin carboxylase catalyzes the carboxylation of biotin on its carrier protein (BCCP) and then the CO(2) group is transferred by the carboxyltransferase to acetyl-CoA to form malonyl-CoA. This is Acetyl-coenzyme A carboxylase carboxyl transferase subunit alpha from Klebsiella pneumoniae (strain 342).